The sequence spans 503 residues: GMP synthase [glutamine-hydrolyzing] (503 aa).

Residues M1–D178 enclose the Glutamine amidotransferase type-1 domain. C60 (nucleophile) is an active-site residue. Residues H152 and E154 contribute to the active site. Residues W179 to R377 form the GMPS ATP-PPase domain. S206–A212 is an ATP binding site.

In terms of assembly, homodimer.

It carries out the reaction XMP + L-glutamine + ATP + H2O = GMP + L-glutamate + AMP + diphosphate + 2 H(+). The protein operates within purine metabolism; GMP biosynthesis; GMP from XMP (L-Gln route): step 1/1. Functionally, catalyzes the synthesis of GMP from XMP. This chain is GMP synthase [glutamine-hydrolyzing], found in Leifsonia xyli subsp. xyli (strain CTCB07).